A 262-amino-acid chain; its full sequence is Phosphomannomutase 1 (262 aa).

Position 2 is an N-acetylalanine (A2). Residue D19 is the Nucleophile of the active site. Residues D19 and D21 each contribute to the Mg(2+) site. D21 (proton donor/acceptor) is an active-site residue. Residues R28, R132, R143, R150, M186, S188, and D190 each contribute to the alpha-D-mannose 1-phosphate site. Residues N218, F230, D232, and T235 each contribute to the Mg(2+) site. A Phosphoserine modification is found at S242.

The protein belongs to the eukaryotic PMM family. Homodimer. It depends on Mg(2+) as a cofactor. As to expression, strong expression in liver, heart, brain, and pancreas; lower expression in skeletal muscle.

The protein localises to the cytoplasm. It carries out the reaction alpha-D-mannose 1-phosphate = D-mannose 6-phosphate. It functions in the pathway nucleotide-sugar biosynthesis; GDP-alpha-D-mannose biosynthesis; alpha-D-mannose 1-phosphate from D-fructose 6-phosphate: step 2/2. Its activity is regulated as follows. IMP, a metabolite whose concentration is elevated in anoxia, inhibits phosphomannomutase and phosphoglucomutase activities and strongly enhances glucose-1,6-bisphosphatase activity. Its function is as follows. Involved in the synthesis of the GDP-mannose and dolichol-phosphate-mannose required for a number of critical mannosyl transfer reactions. In addition, may be responsible for the degradation of glucose-1,6-bisphosphate in ischemic brain. This chain is Phosphomannomutase 1 (PMM1), found in Homo sapiens (Human).